The following is a 210-amino-acid chain: Chloramphenicol acetyltransferase (210 aa).

The active site involves His79.

The protein belongs to the transferase hexapeptide repeat family.

The catalysed reaction is chloramphenicol + acetyl-CoA = chloramphenicol 3-acetate + CoA. This enzyme is an effector of chloramphenicol resistance in bacteria. In Morganella morganii (Proteus morganii), this protein is Chloramphenicol acetyltransferase (cat).